The primary structure comprises 494 residues: MTDLTTLTIAQARDALITKKLKATELTEAYLKAIELANPTLNAYVTITAEQARKMAAESDRRLAKGERGLLEGIPLGIKDLFATHGVHTQACSNILDGFKPNYESTITANLWQDGAVMLGKLNMDEFAMGSSNETSYYGPVISPWRKKDSNEKLVPGGSSGGSAAAVAAQICAGATATDTGGSIRQPAAFTGTVGIKPTYGRCSRWGVVAFASSLDQAGPIARDVRDCAILLRSMASFDEKDSTSVNLPVPDYESYLGKSIKGMKIGIPKEYYLAGMSQEIIDLWQKGINWLKEAGAEIRDISLPHTKYALPSYYIIAPAEASSNLARYDGVRFGLRVPGKDIIEMYENTRSVGFGDEVKRRILIGTYVLSSGYYDAGYLRAQKVRTLVKRDFDQCFDSGVDAILTPATPTPAFGIADEKIKNDAVAMYLNDIFTVPVNMAGLPGISVPAGLSSNGLPLGLQLIGKPFAEEVIFQIAHIIEQEAGIFCAKKWWI.

Active-site charge relay system residues include K79 and S159. S183 functions as the Acyl-ester intermediate in the catalytic mechanism.

This sequence belongs to the amidase family. GatA subfamily. Heterotrimer of A, B and C subunits.

The catalysed reaction is L-glutamyl-tRNA(Gln) + L-glutamine + ATP + H2O = L-glutaminyl-tRNA(Gln) + L-glutamate + ADP + phosphate + H(+). Its function is as follows. Allows the formation of correctly charged Gln-tRNA(Gln) through the transamidation of misacylated Glu-tRNA(Gln) in organisms which lack glutaminyl-tRNA synthetase. The reaction takes place in the presence of glutamine and ATP through an activated gamma-phospho-Glu-tRNA(Gln). The polypeptide is Glutamyl-tRNA(Gln) amidotransferase subunit A (Bartonella tribocorum (strain CIP 105476 / IBS 506)).